The sequence spans 127 residues: Glycine cleavage system H protein (127 aa).

The region spanning 22–104 (TVRIGITDFA…YDKAWMIVIE (83 aa)) is the Lipoyl-binding domain. N6-lipoyllysine is present on Lys63.

The protein belongs to the GcvH family. The glycine cleavage system is composed of four proteins: P, T, L and H. Requires (R)-lipoate as cofactor.

Functionally, the glycine cleavage system catalyzes the degradation of glycine. The H protein shuttles the methylamine group of glycine from the P protein to the T protein. Is also involved in protein lipoylation via its role as an octanoyl/lipoyl carrier protein intermediate. The sequence is that of Glycine cleavage system H protein from Anoxybacillus flavithermus (strain DSM 21510 / WK1).